The primary structure comprises 789 residues: MEVLDATSLAERLKWEAKGYWLHFEAETPLEKYPAKQHARRVQEKLGIEEGLIYLSGQQARNNEDSDMPAPFRQLRYFYYLSGGPTLAEALVKYDVDEVYYSDEVSDYIIDWYHHSCNRGKLYTLHDPAKSPIGNHHAPIDSVSLQPAMNVARMIKDEHEIKLIRKANDISSKAHREVLSNILKFTNEAQVEGLFLDVCVSHQAKQQAYDPIAASGPNAGTLHYDANDEDFGKRQLMCLDAGCEYELYASDITRTFPLSSKWPSKEAANIYRLVERMQELCIKRLAPGVRYLDLHILAHQIAIDGLLALGILHNGTKEEIYKAGTSRAFFPHGLGHHIGLEVHDVGQAELMSVRRGKQVLEQSSHLEEGMIVTVEPGIYFSVYALQHFYLPSPVHSKYINLEVLNRYLPVGGVRIEDDILITAKSYENLTTAPKGDEMLEIIQRGRSNVNSIPARRQSGRTQITEDEPPLLRAPGISASTPQSILRPIARSSTMPAELKQDKSVDFEPFEGPSLFSNFRRSMTTDEKIQRWQQDHIPTTATRINLTPSSQYKSVCGSNTREVKHVYMISGSFPPGTARGALREQILPACKQCTILCETLDRLRQSLSMSKESPEAELDVSPVISQKQIRNRRSVSSTARHDLRGDRERPQHSPMTGLANGLSAMCLEPLNHVSESPTPSQRRAGGCTPHWRGQNRADQSGDDALRAAQETQILQSKPSVRSNPATDQLSAKAVSDVLLELQRQGPAAGSDRCTLGKQEGVEGIPAISRAKNFHVSTGGSMVGEARRAEE.

Residues Asp-240, Asp-251, Glu-375, and Glu-416 each coordinate Mn(2+). Disordered regions lie at residues 607 to 658 (SMSK…TGLA) and 670 to 704 (NHVSESPTPSQRRAGGCTPHWRGQNRADQSGDDAL). A compositionally biased stretch (polar residues) spans 622–637 (VISQKQIRNRRSVSST). Over residues 638–650 (ARHDLRGDRERPQ) the composition is skewed to basic and acidic residues.

It belongs to the peptidase M24B family. Requires Mn(2+) as cofactor.

It catalyses the reaction Release of any N-terminal amino acid, including proline, that is linked to proline, even from a dipeptide or tripeptide.. Its function is as follows. Catalyzes the removal of a penultimate prolyl residue from the N-termini of peptides. The polypeptide is Probable Xaa-Pro aminopeptidase SNOG_02267 (Phaeosphaeria nodorum (strain SN15 / ATCC MYA-4574 / FGSC 10173) (Glume blotch fungus)).